Here is a 279-residue protein sequence, read N- to C-terminus: Large ribosomal subunit protein uL5c (279 aa).

Disordered regions lie at residues 1-23 and 40-63; these read MAATAVTLPSSPAPFPVTTTASS and LRVAASAAADAPPKPAPPPTSPSG. A chloroplast-targeting transit peptide spans 1–43; the sequence is MAATAVTLPSSPAPFPVTTTASSSRNVRLLLRSPPPRRALRVA. Low complexity predominate over residues 41–50; sequence RVAASAAADA. Pro residues predominate over residues 51–60; that stretch reads PPKPAPPPTS.

Belongs to the universal ribosomal protein uL5 family. In terms of assembly, part of the 50S ribosomal subunit; contacts the 5S rRNA.

The protein localises to the plastid. It localises to the chloroplast. In terms of biological role, binds 5S rRNA, forms part of the central protuberance of the 50S subunit. The sequence is that of Large ribosomal subunit protein uL5c (RPL5) from Oryza sativa subsp. japonica (Rice).